The following is a 280-amino-acid chain: MRKWLIFLLIAAVAGLSACSTSGNTTVSDDLVLVEGGAFKTSKSSYSDKNVTLSDFYIGKYEVTQKQWMDVMGDNPSGFKGEERPVERVTWYDAIEYCNARSIKENLKPYYTIDKETTDPDNKNENDNIKWTVTINEGANGYRLPTGAEWEYAASGGQKSQNFTYSGSNNPDEVAWYWMNAGEKPLTGDWNWPAIENNRNQTKPVGQQKANELGIYDMSGNVREWCWEWHSHPETPENTWRISKGGGWVSSVNTAEISYPGKFDANGLGPDQGLRVVRSK.

An N-terminal signal peptide occupies residues 1–18 (MRKWLIFLLIAAVAGLSA). A lipid anchor (N-palmitoyl cysteine) is attached at cysteine 19. Residue cysteine 19 is the site of S-diacylglycerol cysteine attachment.

The protein localises to the cell membrane. In terms of biological role, is required for the expression of the adjacently encoded xylanase Xyn11E in an active form. LppX seems to act as a specific chaperone necessary for the correct folding of the xylanase during secretion across the cytoplasmic membrane. This Paenibacillus barcinonensis protein is Chaperone protein LppX.